We begin with the raw amino-acid sequence, 89 residues long: Neurotoxin beta-KTx 52.1 (89 aa).

The N-terminal stretch at Met1–Ala20 is a signal peptide. A propeptide spanning residues Gly21–Asp39 is cleaved from the precursor. Residues Glu53–Lys89 enclose the BetaSPN-type CS-alpha/beta domain. 3 disulfide bridges follow: Cys56–Cys76, Cys63–Cys81, and Cys67–Cys83.

This sequence belongs to the long chain scorpion toxin family. Class 2 subfamily. Expressed by the venom gland.

It localises to the secreted. Functionally, inhibits voltage-gated potassium channel. The polypeptide is Neurotoxin beta-KTx 52.1 (Lychas mucronatus (Chinese swimming scorpion)).